The sequence spans 622 residues: Phosphatidylinositol 4-kinase gamma 6 (622 aa).

The Ubiquitin-like; degenerate domain maps to R38–R95. The 302-residue stretch at G158 to P459 folds into the PI3K/PI4K catalytic domain. The interval V164 to G170 is G-loop. ATP contacts are provided by residues N165–A171, K186, and Q277–V280. The interval L310–N318 is catalytic loop. Positions P339–I365 are activation loop. D341 provides a ligand contact to ATP. S565 is subject to Phosphoserine.

This sequence belongs to the PI3/PI4-kinase family. Type II PI4K subfamily.

The enzyme catalyses a 1,2-diacyl-sn-glycero-3-phospho-(1D-myo-inositol) + ATP = a 1,2-diacyl-sn-glycero-3-phospho-(1D-myo-inositol 4-phosphate) + ADP + H(+). Its function is as follows. The phosphorylation of phosphatidylinositol (PI) to PI4P is the first committed step in the generation of phosphatidylinositol 4,5-bisphosphate (PIP2), a precursor of the second messenger inositol 1,4,5-trisphosphate (InsP3). This is Phosphatidylinositol 4-kinase gamma 6 (PI4KG6) from Arabidopsis thaliana (Mouse-ear cress).